A 272-amino-acid polypeptide reads, in one-letter code: Homeobox protein Hox-D12 (272 aa).

The homeobox DNA-binding region spans S204–V263.

This sequence belongs to the Abd-B homeobox family.

The protein localises to the nucleus. Functionally, sequence-specific transcription factor which is part of a developmental regulatory system that provides cells with specific positional identities on the anterior-posterior axis. This is Homeobox protein Hox-D12 (HOXD12) from Heterodontus francisci (Horn shark).